The chain runs to 141 residues: Holo-[acyl-carrier-protein] synthase (141 aa).

Mg(2+) is bound by residues Asp8 and Glu63.

It belongs to the P-Pant transferase superfamily. AcpS family. Mg(2+) is required as a cofactor.

The protein resides in the cytoplasm. The enzyme catalyses apo-[ACP] + CoA = holo-[ACP] + adenosine 3',5'-bisphosphate + H(+). In terms of biological role, transfers the 4'-phosphopantetheine moiety from coenzyme A to a Ser of acyl-carrier-protein. The polypeptide is Holo-[acyl-carrier-protein] synthase (Rhodospirillum centenum (strain ATCC 51521 / SW)).